The sequence spans 223 residues: Putative oxidoreductase MT1904 (223 aa).

Position 4–28 (4–28 (LVTGGDTDLGRTMAEGFRNDGHKVT)) interacts with NADP(+). Ser-128 provides a ligand contact to substrate.

Belongs to the short-chain dehydrogenases/reductases (SDR) family.

The sequence is that of Putative oxidoreductase MT1904 from Mycobacterium tuberculosis (strain CDC 1551 / Oshkosh).